Consider the following 296-residue polypeptide: Phosphate transport system permease protein PstA (296 aa).

The Cytoplasmic portion of the chain corresponds to 1 to 28 (MAMVEMQTTAALAESRRKMQARRRLKNR). Residues 29 to 50 (IALTLSMATMAFGLFWLIWILM) traverse the membrane as a helical segment. At 51–82 (STITRGIDGMSLALFTEMTPPPNTEGGGLANA) the chain is on the periplasmic side. Residues 83–102 (LAGSGLLILWATVFGTPLGI) form a helical membrane-spanning segment. The region spanning 83–286 (LAGSGLLILW…LCVLLLNILA (204 aa)) is the ABC transmembrane type-1 domain. The Cytoplasmic portion of the chain corresponds to 103–126 (MAGIYLAEYGRKSWLAEVIRFIND). The chain crosses the membrane as a helical span at residues 127-146 (ILLSAPSIVVGLFVYTIVVA). Topologically, residues 147-150 (QMEH) are periplasmic. Residues 151-169 (FSGWAGVIALALLQVPIVI) form a helical membrane-spanning segment. Residues 170 to 204 (RTTENMLKLVPYSLREAAYALGTPKWKMISAITLK) lie on the Cytoplasmic side of the membrane. Residues 205-223 (ASVSGIMTGILLAIARIAG) traverse the membrane as a helical segment. The Periplasmic segment spans residues 224 to 266 (ETAPLLFTALSNQFWSTDMMQPIANLPVTIFKFAMSPFAEWQQ). Residues 267 to 286 (LAWAGVLIITLCVLLLNILA) form a helical membrane-spanning segment. The Cytoplasmic segment spans residues 287 to 296 (RVVFAKNKHG).

It belongs to the binding-protein-dependent transport system permease family. CysTW subfamily.

It localises to the cell inner membrane. Functionally, part of the binding-protein-dependent transport system for phosphate; probably responsible for the translocation of the substrate across the membrane. This Escherichia coli (strain K12) protein is Phosphate transport system permease protein PstA (pstA).